We begin with the raw amino-acid sequence, 399 residues long: Paraneoplastic antigen-like protein 6A (399 aa).

Belongs to the PNMA family. As to expression, expressed in the brain.

The polypeptide is Paraneoplastic antigen-like protein 6A (Homo sapiens (Human)).